A 355-amino-acid polypeptide reads, in one-letter code: Lipopolysaccharide heptosyltransferase 1 (355 aa).

ADP-L-glycero-beta-D-manno-heptose is bound by residues threonine 186, threonine 187, lysine 191, glutamate 221, aspartate 260, threonine 261, glycine 262, and histidine 265.

This sequence belongs to the glycosyltransferase 9 family.

It is found in the cell inner membrane. It catalyses the reaction an alpha-Kdo-(2-&gt;4)-alpha-Kdo-(2-&gt;6)-lipid A + ADP-L-glycero-beta-D-manno-heptose = an L-alpha-D-Hep-(1-&gt;5)-[alpha-Kdo-(2-&gt;4)]-alpha-Kdo-(2-&gt;6)-lipid A + ADP + H(+). The protein operates within bacterial outer membrane biogenesis; LPS core biosynthesis. Glycosyltransferase involved in the biosynthesis of the core oligosaccharide region of lipopolysaccharide (LPS). Catalyzes the addition of the first heptose unit to one 3-deoxy-D-manno-octulosonic acid (Kdo) residue of the Kdo2-lipid A module. This Pseudomonas aeruginosa (strain ATCC 15692 / DSM 22644 / CIP 104116 / JCM 14847 / LMG 12228 / 1C / PRS 101 / PAO1) protein is Lipopolysaccharide heptosyltransferase 1.